The primary structure comprises 924 residues: Probable dipeptidyl-aminopeptidase B (924 aa).

Positions 1–12 (MPSTYSDDNTLR) are enriched in polar residues. Residues 1-102 (MPSTYSDDNT…RSNQRSSADG (102 aa)) are disordered. Residues 1–111 (MPSTYSDDNT…GQRMDRSLRR (111 aa)) are Cytoplasmic-facing. A compositionally biased stretch (basic and acidic residues) spans 14-23 (GLDRFRDHSP). Over residues 31–43 (SQETDSTVSTTSI) the composition is skewed to polar residues. Basic and acidic residues predominate over residues 47–58 (RIQERLDTKEFP). The segment covering 87–100 (NASPSSRSNQRSSA) has biased composition (low complexity). A helical; Signal-anchor for type II membrane protein transmembrane segment spans residues 112–132 (WLFIVSGALVATWVIGLIFFV). Topologically, residues 133–924 (SSKAYKPSSS…GMKRRALPTA (792 aa)) are vacuolar. Asn231 and Asn364 each carry an N-linked (GlcNAc...) asparagine glycan. Ser768 (charge relay system) is an active-site residue. The N-linked (GlcNAc...) asparagine glycan is linked to Asn827. Active-site charge relay system residues include Asp845 and His878.

Belongs to the peptidase S9B family.

The protein resides in the vacuole membrane. It catalyses the reaction Release of an N-terminal dipeptide, Xaa-Yaa-|-Zaa-, from a polypeptide, preferentially when Yaa is Pro, provided Zaa is neither Pro nor hydroxyproline.. Functionally, type IV dipeptidyl-peptidase which removes N-terminal dipeptides sequentially from polypeptides having unsubstituted N-termini provided that the penultimate residue is proline. This chain is Probable dipeptidyl-aminopeptidase B (dapB), found in Neurospora crassa (strain ATCC 24698 / 74-OR23-1A / CBS 708.71 / DSM 1257 / FGSC 987).